Consider the following 455-residue polypeptide: MPAESISADSVPDFRSTNRPVSRVAVLGATGSIGVAALDVIENLNRCDPDFAWEVSSMSGHSQIDPLIELAGGCHTPPKCVVVSDAEMEAQAAKALRTASTQTSSRLTERCRLDVGPDALVRAATENDVDVVVAAIVGRAGLESTLAAVHAGKRVALANKETLVVAGPVVTRAAANNGAQLLPVDSEHSAIFQCLAESRARQSQYATAKQSIQPESVRATDPPSSTTDSPAKTHWPGVRRLILTASGGPFRDWTTAQMREATIEQALAHPTWKMGAKITIDSASMMNKALEVIEAKWLFDVPADKIEVVVHPQSLIHSLVEFEDGSLIAQVSPPDMRIPIQYALTYPRRLPCPAPELDRSQAWDMSLCPADPDRFPALALGFEVARVGGTAGAVVNAANETAVDLFLHGQIRFTDIPEICRRTLLDHDHESSPTLERLLKLDVWARARARELAQI.

Residues T30, G31, S32, I33, Q63, and N159 each contribute to the NADPH site. Position 160 (K160) interacts with 1-deoxy-D-xylulose 5-phosphate. E161 provides a ligand contact to NADPH. D185 provides a ligand contact to Mn(2+). Positions 186 and 187 each coordinate 1-deoxy-D-xylulose 5-phosphate. Mn(2+) is bound at residue E187. Over residues 205–214 the composition is skewed to polar residues; the sequence is YATAKQSIQP. The tract at residues 205–233 is disordered; sequence YATAKQSIQPESVRATDPPSSTTDSPAKT. 1-deoxy-D-xylulose 5-phosphate contacts are provided by S246 and H269. Residue G275 coordinates NADPH. Residues S282, N287, K288, and E291 each coordinate 1-deoxy-D-xylulose 5-phosphate. A Mn(2+)-binding site is contributed by E291.

The protein belongs to the DXR family. The cofactor is Mg(2+). Mn(2+) is required as a cofactor.

The enzyme catalyses 2-C-methyl-D-erythritol 4-phosphate + NADP(+) = 1-deoxy-D-xylulose 5-phosphate + NADPH + H(+). It participates in isoprenoid biosynthesis; isopentenyl diphosphate biosynthesis via DXP pathway; isopentenyl diphosphate from 1-deoxy-D-xylulose 5-phosphate: step 1/6. In terms of biological role, catalyzes the NADPH-dependent rearrangement and reduction of 1-deoxy-D-xylulose-5-phosphate (DXP) to 2-C-methyl-D-erythritol 4-phosphate (MEP). In Rhodopirellula baltica (strain DSM 10527 / NCIMB 13988 / SH1), this protein is 1-deoxy-D-xylulose 5-phosphate reductoisomerase.